A 466-amino-acid chain; its full sequence is 3-isopropylmalate dehydratase large subunit (466 aa).

[4Fe-4S] cluster contacts are provided by Cys-347, Cys-407, and Cys-410.

Belongs to the aconitase/IPM isomerase family. LeuC type 1 subfamily. In terms of assembly, heterodimer of LeuC and LeuD. Requires [4Fe-4S] cluster as cofactor.

It carries out the reaction (2R,3S)-3-isopropylmalate = (2S)-2-isopropylmalate. The protein operates within amino-acid biosynthesis; L-leucine biosynthesis; L-leucine from 3-methyl-2-oxobutanoate: step 2/4. In terms of biological role, catalyzes the isomerization between 2-isopropylmalate and 3-isopropylmalate, via the formation of 2-isopropylmaleate. This chain is 3-isopropylmalate dehydratase large subunit, found in Shewanella woodyi (strain ATCC 51908 / MS32).